The chain runs to 140 residues: Nucleoside diphosphate kinase (140 aa).

ATP-binding residues include K11, F59, R87, T93, R104, and N114. H117 (pros-phosphohistidine intermediate) is an active-site residue.

Belongs to the NDK family. Homotetramer. It depends on Mg(2+) as a cofactor.

It is found in the cytoplasm. The enzyme catalyses a 2'-deoxyribonucleoside 5'-diphosphate + ATP = a 2'-deoxyribonucleoside 5'-triphosphate + ADP. It catalyses the reaction a ribonucleoside 5'-diphosphate + ATP = a ribonucleoside 5'-triphosphate + ADP. Functionally, major role in the synthesis of nucleoside triphosphates other than ATP. The ATP gamma phosphate is transferred to the NDP beta phosphate via a ping-pong mechanism, using a phosphorylated active-site intermediate. This is Nucleoside diphosphate kinase from Xanthobacter autotrophicus (strain ATCC BAA-1158 / Py2).